A 356-amino-acid chain; its full sequence is MSSISDLVNLNLSDSTERVIAEYIWVGGSGMDMRSKARTLSGPVKDPSKLPKWNYDGSSTGQAPGQDSEVILYPQTIFRDPFRRGNNILVMCDAYTPAGEPIPTNKRHNAAKIFSNPEVVAEEPWYGIEQEYTLLQKDVQWPVGWPLGGFPGPQGPYYCGIGANKAFGRDIVDSHYKACLYAGINISGINGEVMPGQWEFQVGPSVGISAADELWVARYILERITEIAGVVLSFDPKPIQGDWNGAGAHTNYSTKSMRNDGGYEVIKKAITKLEKRHKEHIAAYGEGNERRLTGKHETADMNTFIWGVANRGASIRVGRDTEKAGKGYFEDRRPASNMDPYVVTSMIAETTLLWKP.

A GS beta-grasp domain is found at 19–99 (VIAEYIWVGG…VMCDAYTPAG (81 aa)). One can recognise a GS catalytic domain in the interval 106–356 (KRHNAAKIFS…IAETTLLWKP (251 aa)).

The protein belongs to the glutamine synthetase family. Homooctamer. As to expression, this is a nodule isozyme.

It is found in the cytoplasm. It catalyses the reaction L-glutamate + NH4(+) + ATP = L-glutamine + ADP + phosphate + H(+). The sequence is that of Glutamine synthetase N-1 (Gln-gamma) from Phaseolus vulgaris (Kidney bean).